Consider the following 440-residue polypeptide: Glutamyl-tRNA reductase (440 aa).

Substrate contacts are provided by residues 50–53 (TCNR), serine 109, 114–116 (EPQ), and glutamine 120. The Nucleophile role is filled by cysteine 51. An NADP(+)-binding site is contributed by 189-194 (GAGEMA).

The protein belongs to the glutamyl-tRNA reductase family. In terms of assembly, homodimer.

It catalyses the reaction (S)-4-amino-5-oxopentanoate + tRNA(Glu) + NADP(+) = L-glutamyl-tRNA(Glu) + NADPH + H(+). It participates in porphyrin-containing compound metabolism; protoporphyrin-IX biosynthesis; 5-aminolevulinate from L-glutamyl-tRNA(Glu): step 1/2. Its function is as follows. Catalyzes the NADPH-dependent reduction of glutamyl-tRNA(Glu) to glutamate 1-semialdehyde (GSA). This Nitratidesulfovibrio vulgaris (strain DP4) (Desulfovibrio vulgaris) protein is Glutamyl-tRNA reductase.